The sequence spans 625 residues: Protein SUPPRESSOR OF GENE SILENCING 3 (625 aa).

3 disordered regions span residues 1–20 (MSSRAGPMSKEKNVQGGYRP), 30–148 (AGTR…SAQH), and 161–195 (VDNASEEENDSDALDDSDDDLASDDYDSDVSQKSH). A compositionally biased stretch (polar residues) spans 54–70 (KPGNTSGKTWVSQNSNP). The segment covering 80-94 (GRGSNVSGRGNNVSG) has biased composition (low complexity). The span at 161-188 (VDNASEEENDSDALDDSDDDLASDDYDS) shows a compositional bias: acidic residues. Coiled-coil stretches lie at residues 452–533 (KNKL…QQQE) and 564–615 (IEFQ…EQLM).

It belongs to the SGS3 family. In terms of assembly, interacts with begomoviruses protein V2. Interacts with SGIP1 in cytoplasmic granules.

It is found in the cytoplasm. The protein resides in the perinuclear region. The protein localises to the cytoplasmic granule. Required for post-transcriptional gene silencing and natural virus resistance. May bind nucleic acids and is essential for the biogenesis of trans-acting siRNAs but is not required for silencing induced by IR-PTGS. Involved in the juvenile-to-adult transition regulation. In case of begomoviruses infection, it is targeted by the viral protein V2 leading to suppression of post-transcriptional gene silencing. Involved in the mechanisms necessary for quick response to heat and subsequent heritable transgenerational memory of heat acclimation (global warming) such as early flowering and attenuated immunity; this process includes epigenetic regulation as well as post-transcriptional gene silencing (PTGS). In response to heat, HSFA2 is activated and promotes the expression of REF6 which in turn derepresses HSFA2, thus establishing an inheritable feedback loop able to trigger SGIP1 and subsequent SGIP1-mediated SGS3 degradation; this prevents the biosynthesis of trans-acting siRNA (tasiRNA) and leads to the release of HTT5, which drives early flowering but attenuates immunity. The protein is Protein SUPPRESSOR OF GENE SILENCING 3 of Arabidopsis thaliana (Mouse-ear cress).